The following is a 1070-amino-acid chain: Isoleucine--tRNA ligase (1070 aa).

A 'HIGH' region motif is present at residues 50–60; it reads PYTSGAAHMGT. The short motif at 606-610 is the 'KMSKS' region element; that stretch reads GMSKS. ATP is bound at residue Lys609.

Belongs to the class-I aminoacyl-tRNA synthetase family. IleS type 2 subfamily. Monomer. Zn(2+) is required as a cofactor.

It localises to the cytoplasm. It catalyses the reaction tRNA(Ile) + L-isoleucine + ATP = L-isoleucyl-tRNA(Ile) + AMP + diphosphate. In terms of biological role, catalyzes the attachment of isoleucine to tRNA(Ile). As IleRS can inadvertently accommodate and process structurally similar amino acids such as valine, to avoid such errors it has two additional distinct tRNA(Ile)-dependent editing activities. One activity is designated as 'pretransfer' editing and involves the hydrolysis of activated Val-AMP. The other activity is designated 'posttransfer' editing and involves deacylation of mischarged Val-tRNA(Ile). This chain is Isoleucine--tRNA ligase, found in Halobacterium salinarum (strain ATCC 700922 / JCM 11081 / NRC-1) (Halobacterium halobium).